The following is a 138-amino-acid chain: Cysteine desulfuration protein SufE (138 aa).

Cys51 serves as the catalytic Cysteine persulfide intermediate.

This sequence belongs to the SufE family. In terms of assembly, homodimer. Interacts with SufS.

Its subcellular location is the cytoplasm. Its pathway is cofactor biosynthesis; iron-sulfur cluster biosynthesis. In terms of biological role, participates in cysteine desulfuration mediated by SufS. Cysteine desulfuration mobilizes sulfur from L-cysteine to yield L-alanine and constitutes an essential step in sulfur metabolism for biosynthesis of a variety of sulfur-containing biomolecules. Functions as a sulfur acceptor for SufS, by mediating the direct transfer of the sulfur atom from the S-sulfanylcysteine of SufS, an intermediate product of cysteine desulfuration process. In Escherichia coli O6:K15:H31 (strain 536 / UPEC), this protein is Cysteine desulfuration protein SufE.